Reading from the N-terminus, the 96-residue chain is RNA-binding protein Hfq (96 aa).

The Sm domain maps to 9–68 (DPYLNALRRERIPVSIYLVNGIKLQGQIESFDQFVILLKNTVNQMVYKHAISTVVPARSV).

This sequence belongs to the Hfq family. In terms of assembly, homohexamer.

RNA chaperone that binds small regulatory RNA (sRNAs) and mRNAs to facilitate mRNA translational regulation in response to envelope stress, environmental stress and changes in metabolite concentrations. Also binds with high specificity to tRNAs. This is RNA-binding protein Hfq from Histophilus somni (strain 129Pt) (Haemophilus somnus).